The following is a 269-amino-acid chain: MDRPVTKRITVLTLQNIYREKGKIAALTCYDATFAAVLENAGVDILLVGDSLGNVIQGQASTLPVTLDEMIYHVCCVERGTHSVFILADMPFGTFQVSPQEAFRNAVRLMAAGAQMVKVEGGRHMAETIEFLTCRGIPVCAHIGLIPQSVHQLGGYKIQGKTPDGARQLLEDALLLQKAGAAMLVMELIPAALGEEITRSLSIPTIGIGAGAVCSGQVLVLHDMLGISSGTLPRFVKNFMAGADSIQVAVRNYVKAVKTGEFPAHEHMF.

Residues D50 and D89 each contribute to the Mg(2+) site. Residues 50-51 (DS), D89, and K118 contribute to the 3-methyl-2-oxobutanoate site. A Mg(2+)-binding site is contributed by E120. E187 (proton acceptor) is an active-site residue.

The protein belongs to the PanB family. As to quaternary structure, homodecamer; pentamer of dimers. Mg(2+) is required as a cofactor.

Its subcellular location is the cytoplasm. It catalyses the reaction 3-methyl-2-oxobutanoate + (6R)-5,10-methylene-5,6,7,8-tetrahydrofolate + H2O = 2-dehydropantoate + (6S)-5,6,7,8-tetrahydrofolate. It functions in the pathway cofactor biosynthesis; (R)-pantothenate biosynthesis; (R)-pantoate from 3-methyl-2-oxobutanoate: step 1/2. Catalyzes the reversible reaction in which hydroxymethyl group from 5,10-methylenetetrahydrofolate is transferred onto alpha-ketoisovalerate to form ketopantoate. The polypeptide is 3-methyl-2-oxobutanoate hydroxymethyltransferase (Nitrosomonas eutropha (strain DSM 101675 / C91 / Nm57)).